The sequence spans 497 residues: Probable polyamine oxidase 4 (497 aa).

Positions 58, 66, 247, and 435 each coordinate FAD. The Microbody targeting signal motif lies at 495–497; it reads SRM.

Belongs to the flavin monoamine oxidase family. It depends on FAD as a cofactor. Highly expressed in roots, flowers and greening cotelydons. Lower expression in other tissues.

It localises to the peroxisome. The catalysed reaction is spermine + O2 + H2O = 3-aminopropanal + spermidine + H2O2. The enzyme catalyses spermidine + O2 + H2O = 3-aminopropanal + putrescine + H2O2. It functions in the pathway amine and polyamine degradation; spermine degradation. The protein operates within amine and polyamine degradation; spermidine degradation. Functionally, flavoenzyme involved in polyamine back-conversion. Catalyzes the oxidation of the secondary amino group of polyamines, such as spermine and spermidine. Substrate preference is spermine &gt; spermidine. No activity detected when putrescine or N(1)-acetylspermine are used as substrates. Plays an important role in the regulation of polyamine intracellular concentration. This chain is Probable polyamine oxidase 4 (PAO4), found in Arabidopsis thaliana (Mouse-ear cress).